The chain runs to 487 residues: WD-40 repeat-containing protein MSI5 (487 aa).

Met1 is subject to N-acetylmethionine. Low complexity predominate over residues Met1 to Thr12. Positions Met1 to Phe44 are disordered. The Nuclear localization signal motif lies at Pro14 to Pro21. WD repeat units lie at residues Ile142–Ala182, Gly197–Gly237, Gly270–Met310, Ala315–Val355, Gly364–Glu404, and Gly419–Glu466. The segment at Ala236–Tyr268 is disordered. A compositionally biased stretch (polar residues) spans Gly237–Glu252. A DWD box motif is present at residues Phe288 to Arg303.

The protein belongs to the WD repeat RBAP46/RBAP48/MSI1 family. As to quaternary structure, interacts with AHL16. Interacts with LHP1, PDP2, PDP3 and PDP6. Component of the PRC2 (polycomb repressive complex 2) complex which regulates histone methylation on histone H3K27.

It localises to the nucleus. Its function is as follows. Core histone-binding subunit that may target chromatin assembly factors, chromatin remodeling factors and histone deacetylases to their histone substrates in a manner that is regulated by nucleosomal DNA. Acts together with PDP1 and MSI4/FVE to regulate the function of the PRC2 complex on FLC. The polypeptide is WD-40 repeat-containing protein MSI5 (Arabidopsis thaliana (Mouse-ear cress)).